The primary structure comprises 266 residues: 3-methyl-2-oxobutanoate hydroxymethyltransferase (266 aa).

Residues D45 and D84 each coordinate Mg(2+). Residues 45 to 46 (DS), D84, and K112 each bind 3-methyl-2-oxobutanoate. Residue E114 participates in Mg(2+) binding. E181 functions as the Proton acceptor in the catalytic mechanism.

It belongs to the PanB family. Homodecamer; pentamer of dimers. It depends on Mg(2+) as a cofactor.

It is found in the cytoplasm. The enzyme catalyses 3-methyl-2-oxobutanoate + (6R)-5,10-methylene-5,6,7,8-tetrahydrofolate + H2O = 2-dehydropantoate + (6S)-5,6,7,8-tetrahydrofolate. The protein operates within cofactor biosynthesis; (R)-pantothenate biosynthesis; (R)-pantoate from 3-methyl-2-oxobutanoate: step 1/2. Catalyzes the reversible reaction in which hydroxymethyl group from 5,10-methylenetetrahydrofolate is transferred onto alpha-ketoisovalerate to form ketopantoate. This Pseudomonas fluorescens (strain SBW25) protein is 3-methyl-2-oxobutanoate hydroxymethyltransferase.